The following is a 198-amino-acid chain: Carnitine operon protein CaiE (198 aa).

A disordered region spans residues 179–198 (VEENRPRLKGTTDVKPKSAQ). Residues 180-198 (EENRPRLKGTTDVKPKSAQ) are compositionally biased toward basic and acidic residues.

It belongs to the transferase hexapeptide repeat family.

Its pathway is amine and polyamine metabolism; carnitine metabolism. Overproduction of CaiE stimulates the activity of CaiB and CaiD. In Salmonella agona (strain SL483), this protein is Carnitine operon protein CaiE.